The following is a 357-amino-acid chain: Mitochondrial carrier protein LEU5 (357 aa).

6 helical membrane passes run 31-47 (DYIVRSGLAGGISGSCA), 103-119 (LRIFPYAAVKFVAYEQI), 136-153 (LVSGSLAGLCSVFITYPL), 208-228 (VPTVLGMIPYAGVSFFAHDLL), 269-285 (ISGGLAGMASQTAAYPF), and 325-347 (GFFVGLSIGYIKVTPMVACSFFV). Solcar repeat units follow at residues 31–122 (DYIV…IRNT), 130–231 (ESHW…LHDV), and 262–354 (LRTW…MKWN).

Belongs to the mitochondrial carrier (TC 2.A.29) family.

Its subcellular location is the mitochondrion inner membrane. Functionally, required for the accumulation of coenzyme A in the mitochondrial matrix. This chain is Mitochondrial carrier protein LEU5 (LEU5), found in Saccharomyces cerevisiae (strain ATCC 204508 / S288c) (Baker's yeast).